A 1004-amino-acid chain; its full sequence is Caspase recruitment domain-containing protein 14 (1004 aa).

A CARD domain is found at aspartate 15–glutamine 107. Residues leucine 128–glutamate 409 are a coiled coil. Residues glutamate 409–glutamine 568 are maintains the protein in an inactive state. Residue serine 544 is modified to Phosphoserine. Positions glutamine 568–threonine 658 constitute a PDZ domain. The Guanylate kinase-like domain occupies alanine 807 to alanine 990.

As to quaternary structure, interacts (via CARD domain) with BCL10 (via CARD domain). Forms a complex with MALT1 and BCL10; resulting in the formation of a CBM (CARD14-BLC10-MALT1) complex. Interacts with TRAF2, TRAF3 and TRAF6. Isoform 1 is detected in placenta and epidermal keratinocytes. Isoform 2 is detected in leukocytes and fetal brain.

The protein localises to the cytoplasm. Functionally, acts as a scaffolding protein that can activate the inflammatory transcription factor NF-kappa-B and p38/JNK MAP kinase signaling pathways. Forms a signaling complex with BCL10 and MALT1, and activates MALT1 proteolytic activity and inflammatory gene expression. MALT1 is indispensable for CARD14-induced activation of NF-kappa-B and p38/JNK MAP kinases. May play a role in signaling mediated by TRAF2, TRAF3 and TRAF6 and protects cells against apoptosis. In terms of biological role, not able to activate the inflammatory transcription factor NF-kappa-B and may function as a dominant negative regulator. This is Caspase recruitment domain-containing protein 14 (CARD14) from Homo sapiens (Human).